An 88-amino-acid chain; its full sequence is uncharacterized protein (88 aa).

An N-terminal signal peptide occupies residues M1–A24.

To Rhizobium NGR234A y4oL.

This is an uncharacterized protein from Sinorhizobium fredii (strain NBRC 101917 / NGR234).